Consider the following 101-residue polypeptide: Small ribosomal subunit protein uS10 (101 aa).

The protein belongs to the universal ribosomal protein uS10 family. Part of the 30S ribosomal subunit.

In terms of biological role, involved in the binding of tRNA to the ribosomes. This chain is Small ribosomal subunit protein uS10, found in Corynebacterium urealyticum (strain ATCC 43042 / DSM 7109).